A 487-amino-acid polypeptide reads, in one-letter code: 3-octaprenyl-4-hydroxybenzoate carboxy-lyase (487 aa).

Asn172 is a Mn(2+) binding site. Prenylated FMN contacts are provided by residues 175–177 (IYR), 189–191 (RWL), and 194–195 (RG). Glu238 contacts Mn(2+). The active-site Proton donor is Asp287.

Belongs to the UbiD family. As to quaternary structure, homohexamer. Prenylated FMN serves as cofactor. The cofactor is Mn(2+).

The protein localises to the cell membrane. The enzyme catalyses a 4-hydroxy-3-(all-trans-polyprenyl)benzoate + H(+) = a 2-(all-trans-polyprenyl)phenol + CO2. The protein operates within cofactor biosynthesis; ubiquinone biosynthesis. Functionally, catalyzes the decarboxylation of 3-octaprenyl-4-hydroxy benzoate to 2-octaprenylphenol, an intermediate step in ubiquinone biosynthesis. In Nitrosospira multiformis (strain ATCC 25196 / NCIMB 11849 / C 71), this protein is 3-octaprenyl-4-hydroxybenzoate carboxy-lyase.